Here is a 1537-residue protein sequence, read N- to C-terminus: Dicer-like protein 1 (1537 aa).

Positions 38–68 (SDPAESSVDVQDEHSSDDSDNENEVFPKQND) are disordered. Residues 133-314 (LFERAKTQNT…EAATRLETFL (182 aa)) enclose the Helicase ATP-binding domain. 146–153 (LDTGSGKT) provides a ligand contact to ATP. The DEAH box motif lies at 259-262 (DEAH). The Helicase C-terminal domain occupies 459–618 (ELSKHFNDTT…EILPEDRILH (160 aa)). The Dicer dsRNA-binding fold domain maps to 651-741 (AIAILARYAS…NSIYHRRLPA (91 aa)). Residues 891–1019 (DTVSFVHNND…ICAEPLRISA (129 aa)) enclose the PAZ domain. 2 consecutive RNase III domains span residues 1043 to 1202 (IALE…LSGG) and 1253 to 1405 (ARHV…VDSK). Mg(2+)-binding residues include glutamate 1294, aspartate 1391, and glutamate 1394. In terms of domain architecture, DRBM spans 1439-1507 (TFLHNKLTNE…SEKALAVLDG (69 aa)). Positions 1451, 1478, 1519, and 1521 each coordinate Zn(2+).

This sequence belongs to the helicase family. Dicer subfamily. Mg(2+) serves as cofactor. It depends on Mn(2+) as a cofactor.

Functionally, dicer-like endonuclease involved in cleaving double-stranded RNA in the RNA interference (RNAi) pathway. Produces 21 to 25 bp dsRNAs (siRNAs) which target the selective destruction of homologous RNAs leading to sequence-specific suppression of gene expression, called post-transcriptional gene silencing (PTGS). Part of a broad host defense response against viral infection and transposons. In Aspergillus fumigatus (strain ATCC MYA-4609 / CBS 101355 / FGSC A1100 / Af293) (Neosartorya fumigata), this protein is Dicer-like protein 1 (dcl1).